The primary structure comprises 128 residues: Probable 4-amino-4-deoxy-L-arabinose-phosphoundecaprenol flippase subunit ArnF (128 aa).

The chain crosses the membrane as a helical span at residues Met1–Gly21. At Tyr22–Asp35 the chain is on the periplasmic side. The helical transmembrane segment at Phe36–Gly56 threads the bilayer. Residues Tyr57–Ala76 lie on the Cytoplasmic side of the membrane. Residues Tyr77–Trp97 form a helical membrane-spanning segment. Topologically, residues Glu98–Thr100 are periplasmic. A helical transmembrane segment spans residues Phe101–Leu121. At Pro122–Tyr128 the chain is on the cytoplasmic side.

The protein belongs to the ArnF family. As to quaternary structure, heterodimer of ArnE and ArnF.

It is found in the cell inner membrane. It participates in bacterial outer membrane biogenesis; lipopolysaccharide biosynthesis. Translocates 4-amino-4-deoxy-L-arabinose-phosphoundecaprenol (alpha-L-Ara4N-phosphoundecaprenol) from the cytoplasmic to the periplasmic side of the inner membrane. The sequence is that of Probable 4-amino-4-deoxy-L-arabinose-phosphoundecaprenol flippase subunit ArnF from Escherichia fergusonii (strain ATCC 35469 / DSM 13698 / CCUG 18766 / IAM 14443 / JCM 21226 / LMG 7866 / NBRC 102419 / NCTC 12128 / CDC 0568-73).